Consider the following 121-residue polypeptide: D-ornithine 4,5-aminomutase subunit alpha (121 aa).

As to quaternary structure, heterotetramer of 2 alpha (OraS) and 2 beta (OraE) subunits.

It carries out the reaction D-ornithine = (2R,4S)-2,4-diaminopentanoate. Its activity is regulated as follows. Increased activity in the presence of dithiothreitol (DTT) in vitro. Inhibited by 1 mM potassium phosphate and potassium chloride. Inhibited by L-alpha-ornithine, D,L-alpha-lysine, L-beta-lysine (50%-60%), L-alpha-lysine (26%) and by delta-amino-n-valeric acid to a lesser extent. Significant decrease in activity is observed in the presence of 0.2 mM p-chloromercuribenzoate, N-ethylmaleimide and also by 2 mM iodoacetate to a lesser extent but not inhibited by arsenite. Its function is as follows. Component of a complex that catalyzes the reversible migration of the omega amino group of D-ornithine to C-4 to form (2R,4S)-2,4-diaminopentanoic acid. The role of OraS remains obscure; however, it seems to be required for a correct folding of the OraE subunit. The complex is active only on D-ornithine and 2,4-diaminopentanoic acid and not active on L-ornithine, L-beta-lysine, L-alpha-lysine or D-alpha-lysine. This is D-ornithine 4,5-aminomutase subunit alpha (oraS) from Acetoanaerobium sticklandii (strain ATCC 12662 / DSM 519 / JCM 1433 / CCUG 9281 / NCIMB 10654 / HF) (Clostridium sticklandii).